The following is a 235-amino-acid chain: 7-cyano-7-deazaguanine synthase (235 aa).

8–18 (FSGGQDSTTCL) contacts ATP. Cys-187, Cys-196, Cys-199, and Cys-202 together coordinate Zn(2+).

This sequence belongs to the QueC family. Zn(2+) is required as a cofactor.

The catalysed reaction is 7-carboxy-7-deazaguanine + NH4(+) + ATP = 7-cyano-7-deazaguanine + ADP + phosphate + H2O + H(+). Its pathway is purine metabolism; 7-cyano-7-deazaguanine biosynthesis. Its function is as follows. Catalyzes the ATP-dependent conversion of 7-carboxy-7-deazaguanine (CDG) to 7-cyano-7-deazaguanine (preQ(0)). The chain is 7-cyano-7-deazaguanine synthase from Aeromonas hydrophila subsp. hydrophila (strain ATCC 7966 / DSM 30187 / BCRC 13018 / CCUG 14551 / JCM 1027 / KCTC 2358 / NCIMB 9240 / NCTC 8049).